The sequence spans 562 residues: Adenylate kinase isoenzyme 5 (562 aa).

Adenylate kinase stretches follow at residues 133–316 and 377–559; these read KIIL…VAVD and KIIF…TAID. An ATP-binding site is contributed by 142 to 147; the sequence is GSGKGT. Residues 162–193 are NMP 1; that stretch reads SVGELLRKKIHSASSNRKWSLIAKIITNGELA. Residues Arg168, 191 to 193, 219 to 222, and Gln226 each bind AMP; these read ELA and GFPR. The segment at 256–266 is LID 1; the sequence is KRAEQQGRPDD. Arg257 is a binding site for ATP. AMP-binding residues include Arg263 and Arg274. ATP is bound at residue 386 to 391; the sequence is GSGKGT. The tract at residues 406 to 435 is NMP 2; the sequence is STGELLRQELTSESERSKLIRDIMERGDLV. AMP is bound by residues Thr407, Arg412, 433–435, 462–465, and Gln469; these read DLV and GYPR. Residues 499–509 are LID 2; that stretch reads QRSQSSQRGED. Arg500 is a binding site for ATP. AMP is bound by residues Arg506 and Arg517. Gly545 contributes to the ATP binding site.

This sequence belongs to the adenylate kinase family. Monomer. Interacts with YWHAZ. As to expression, brain specific.

The protein localises to the cytoplasm. It carries out the reaction AMP + ATP = 2 ADP. It catalyses the reaction a 2'-deoxyribonucleoside 5'-diphosphate + ATP = a 2'-deoxyribonucleoside 5'-triphosphate + ADP. The enzyme catalyses a ribonucleoside 5'-diphosphate + ATP = a ribonucleoside 5'-triphosphate + ADP. Nucleoside monophosphate (NMP) kinase that catalyzes the reversible transfer of the terminal phosphate group between nucleoside triphosphates and monophosphates. Active on AMP and dAMP with ATP as a donor. When GTP is used as phosphate donor, the enzyme phosphorylates AMP, CMP, and to a small extent dCMP. Also displays broad nucleoside diphosphate kinase activity. In Mus musculus (Mouse), this protein is Adenylate kinase isoenzyme 5 (Ak5).